Reading from the N-terminus, the 213-residue chain is Kynurenine formamidase (213 aa).

Trp20 contributes to the substrate binding site. Zn(2+)-binding residues include His50, His54, and Asp56. His60 (proton donor/acceptor) is an active-site residue. Positions 161 and 173 each coordinate Zn(2+).

It belongs to the Cyclase 1 superfamily. KynB family. Homodimer. Requires Zn(2+) as cofactor.

It catalyses the reaction N-formyl-L-kynurenine + H2O = L-kynurenine + formate + H(+). It functions in the pathway amino-acid degradation; L-tryptophan degradation via kynurenine pathway; L-kynurenine from L-tryptophan: step 2/2. Its function is as follows. Catalyzes the hydrolysis of N-formyl-L-kynurenine to L-kynurenine, the second step in the kynurenine pathway of tryptophan degradation. This is Kynurenine formamidase from Pseudomonas paraeruginosa (strain DSM 24068 / PA7) (Pseudomonas aeruginosa (strain PA7)).